A 209-amino-acid chain; its full sequence is Small ribosomal subunit protein uS4 (209 aa).

The S4 RNA-binding domain maps to 98–164 (RRLDNVVYRL…LPIKNAIELN (67 aa)).

This sequence belongs to the universal ribosomal protein uS4 family. In terms of assembly, part of the 30S ribosomal subunit. Contacts protein S5. The interaction surface between S4 and S5 is involved in control of translational fidelity.

One of the primary rRNA binding proteins, it binds directly to 16S rRNA where it nucleates assembly of the body of the 30S subunit. Its function is as follows. With S5 and S12 plays an important role in translational accuracy. The chain is Small ribosomal subunit protein uS4 from Thermosipho melanesiensis (strain DSM 12029 / CIP 104789 / BI429).